The chain runs to 666 residues: L-aspartate N-monooxygenase (nitrosuccinate-forming) (666 aa).

The interval 645–666 (LPAYEDPGVRCPSDDRLTEVTA) is disordered. The segment covering 656–666 (PSDDRLTEVTA) has biased composition (basic and acidic residues).

This sequence belongs to the nitrosuccinic acid synthase family. The cofactor is FAD.

The catalysed reaction is L-aspartate + 3 NADPH + 3 O2 + 2 H(+) = 2-nitrobutanedioate + 3 NADP(+) + 4 H2O. It functions in the pathway antibiotic biosynthesis. Part of a gene cluster involved in the biosynthesis of cremeomycin, a light-sensitive o-diazoquinone with antibacterial and antiproliferative effects. Catalyzes the iterative oxidation of L-aspartic acid to nitrosuccinic acid (2-nitrobutanedioate) via N-hydroxyaspartic acid and nitrososuccinic acid. This chain is L-aspartate N-monooxygenase (nitrosuccinate-forming), found in Streptomyces cremeus.